Here is a 187-residue protein sequence, read N- to C-terminus: Probable nicotinate-nucleotide adenylyltransferase (187 aa).

This sequence belongs to the NadD family.

The catalysed reaction is nicotinate beta-D-ribonucleotide + ATP + H(+) = deamido-NAD(+) + diphosphate. Its pathway is cofactor biosynthesis; NAD(+) biosynthesis; deamido-NAD(+) from nicotinate D-ribonucleotide: step 1/1. Catalyzes the reversible adenylation of nicotinate mononucleotide (NaMN) to nicotinic acid adenine dinucleotide (NaAD). In Anaeromyxobacter dehalogenans (strain 2CP-1 / ATCC BAA-258), this protein is Probable nicotinate-nucleotide adenylyltransferase.